The chain runs to 190 residues: Jupiter microtubule associated homolog 2 (190 aa).

Met1 is subject to N-acetylmethionine. Over residues Met1 to Arg15 the composition is skewed to polar residues. The segment at Met1–Tyr190 is disordered. An N6-acetyllysine modification is found at Lys11. Ser30 carries the post-translational modification Phosphoserine. Polar residues predominate over residues Ile35–Ala44. Residues Ser45, Ser69, and Ser97 each carry the phosphoserine modification. 2 stretches are compositionally biased toward basic and acidic residues: residues Lys110–Ala129 and Glu138–Ile153. Ser144 is modified (phosphoserine).

This sequence belongs to the JUPITER family. In terms of assembly, monomer. Dimer. Interacts with TPCN1.

Its subcellular location is the cytoplasm. It localises to the nucleus. In terms of biological role, nicotinic acid adenine dinucleotide phosphate (NAADP) binding protein required for NAADP-evoked intracellular calcium release. Confers NAADP-sensitivity to the two pore channels (TPCs) complex. Enables NAADP to activate Ca(2+) release from the endoplasmic reticulum through ryanodine receptors. The polypeptide is Jupiter microtubule associated homolog 2 (Mus musculus (Mouse)).